The sequence spans 145 residues: Ribosome maturation factor RimP (145 aa).

Belongs to the RimP family.

The protein localises to the cytoplasm. Required for maturation of 30S ribosomal subunits. The chain is Ribosome maturation factor RimP from Azotobacter vinelandii (strain DJ / ATCC BAA-1303).